The primary structure comprises 148 residues: Transcription antitermination protein NusB (148 aa).

This sequence belongs to the NusB family.

Functionally, involved in transcription antitermination. Required for transcription of ribosomal RNA (rRNA) genes. Binds specifically to the boxA antiterminator sequence of the ribosomal RNA (rrn) operons. The sequence is that of Transcription antitermination protein NusB from Desulfitobacterium hafniense (strain DSM 10664 / DCB-2).